The sequence spans 203 residues: Casparian strip membrane protein 1 (203 aa).

N-acetylalanine is present on alanine 2. At 2 to 40 the chain is on the cytoplasmic side; that stretch reads AKESTTIDVGEPSTVTKSSSHVVKKKGFVAAAAGGGAKR. The helical transmembrane segment at 41 to 61 threads the bilayer; it reads GLAIFDFLLRLAAIGVTIGAA. The Extracellular portion of the chain corresponds to 62-92; sequence SVMYTAQETLPFFTQFLQFQAGYDDLPAFQY. Residues 93-113 form a helical membrane-spanning segment; the sequence is FVIAVAIVASYLVLSLPFSIV. At 114-124 the chain is on the cytoplasmic side; it reads TIVRPLAVAPR. A helical transmembrane segment spans residues 125–145; sequence LILLIFDTLVVTLNTSAAAAA. Over 146 to 177 the chain is Extracellular; the sequence is ASIVYLAHNGNQSTNWLPICQQFGDFCQNVST. N-linked (GlcNAc...) asparagine glycosylation is found at asparagine 156 and asparagine 174. Residues 178–198 form a helical membrane-spanning segment; that stretch reads AVVAASIAILFFIVLIIISAI. At 199 to 203 the chain is on the cytoplasmic side; that stretch reads ALKRH.

This sequence belongs to the Casparian strip membrane proteins (CASP) family. In terms of assembly, homodimer and heterodimers.

It is found in the cell membrane. Regulates membrane-cell wall junctions and localized cell wall deposition. Required for establishment of the Casparian strip membrane domain (CSD) and the subsequent formation of Casparian strips, a cell wall modification of the root endodermis that determines an apoplastic barrier between the intraorganismal apoplasm and the extraorganismal apoplasm and prevents lateral diffusion. The chain is Casparian strip membrane protein 1 from Arabidopsis lyrata subsp. lyrata (Lyre-leaved rock-cress).